Reading from the N-terminus, the 177-residue chain is Protein YOP1 (177 aa).

Over 1 to 35 the chain is Cytoplasmic; it reads MADVISSLQTQLKELDTKFAGNNVLNQLEQRTNLP. The chain crosses the membrane as a helical span at residues 36–55; it reads KSYLVVGSTIFYLLLIFINV. Residues 56 to 57 lie on the Lumenal side of the membrane; it reads GG. The helical transmembrane segment at 58–78 threads the bilayer; sequence IGEILGNFAGFVIPAYYSILA. At 79-88 the chain is on the cytoplasmic side; the sequence is LKTTTTKDDT. The chain crosses the membrane as a helical span at residues 89–103; that stretch reads QLLTYWIVFSFLNVI. The Lumenal segment spans residues 104-108; sequence EFWSK. Residues 109–127 form a helical membrane-spanning segment; it reads ALLYIIPFYWFLKTIFLLY. Over 128-177 the chain is Cytoplasmic; it reads IALPQTGGATMIYNRFISPLTDKYILGPKKTDGVQQSVKEASRATGAATH.

The protein belongs to the DP1 family. Oligomer.

The protein resides in the endoplasmic reticulum membrane. The protein localises to the golgi apparatus membrane. Its function is as follows. Required to generate and maintain the structure of the tubular endoplasmic reticulum network and the vacuole. Induces high curvature in membranes and causes membrane tubule formation. Involved in membrane/vesicle trafficking. This Candida glabrata (strain ATCC 2001 / BCRC 20586 / JCM 3761 / NBRC 0622 / NRRL Y-65 / CBS 138) (Yeast) protein is Protein YOP1 (YOP1).